The sequence spans 1211 residues: Endoplasmic reticulum transmembrane helix translocase (1211 aa).

The Cytoplasmic segment spans residues 1-23 (MGSKALITSPDISSGQLYIKLPT). Residues 24-44 (FFHLYVWPFALFVYPYIGYVY) traverse the membrane as a helical segment. Over 45–54 (QNKLYSEEVR) the chain is Lumenal. A helical membrane pass occupies residues 55–75 (YLTYIAVGTIHALFWLAGEWN). The Cytoplasmic portion of the chain corresponds to 76-191 (TKVYCLMTCR…FDIPIPTFGT (116 aa)). The interval 155–185 (TIGTLKKSTGLTNIQSEIFLYRYGKNCFDIP) is A-domain; part 1. A helical transmembrane segment spans residues 192 to 212 (LFKEHAVAPFFVFQIFCCVLW). Over 213–216 (CLDD) the chain is Lumenal. A helical membrane pass occupies residues 217–237 (YWYFSLFSMFMIIALECSVVW). At 238-397 (QRQRTLTEFR…EKVTANNRES (160 aa)) the chain is on the cytoplasmic side. The interval 250 to 388 (SIKPYEIQVY…LVRTMVFSSE (139 aa)) is A-domain; part 2. A helical transmembrane segment spans residues 398-418 (LYFILFLLVFAIAASGYVWHV). At 419–1057 (GSKTERSRYK…KERPQAGIFN (639 aa)) the chain is on the lumenal side. Residues 464-493 (YIYCTEPFRIPLSGHLDICCFDKTGTLTEE) form a P-domain; part 1 region. Catalysis depends on Asp-485, which acts as the 4-aspartylphosphate intermediate. 2 residues coordinate Mg(2+): Asp-485 and Thr-487. ATP is bound by residues 485 to 487 (DKT), Phe-587, Arg-644, Asp-710, and 824 to 828 (DGTND). The interval 495-685 (MVVQGIAGVN…FAGFLIFTSP (191 aa)) is N-domain. The tract at residues 688-845 (EDARQTVQML…HVGVALLNAS (158 aa)) is P-domain; part 2. Asp-824 provides a ligand contact to Mg(2+). Residues 846 to 955 (EEDMLEMQER…NASDDEAPKL (110 aa)) form an arm-like region. The P-domain; part 3 stretch occupies residues 956–971 (KLGDASVAAPFTSKLA). The chain crosses the membrane as a helical span at residues 1058–1078 (TYIIGSVLGQFAIHIVTLIYI). Topologically, residues 1079 to 1100 (TRVVYLYEDPLEKVDLEETFKP) are cytoplasmic. A helical transmembrane segment spans residues 1101–1121 (SLLNTAIYLLQLIQQVSTFAI). Topologically, residues 1122–1136 (NYQGRPFREALSENK) are lumenal. A helical membrane pass occupies residues 1137–1157 (GMYYGLLGIAFVAIAGVTEFS). At 1158–1174 (PELNAKLQLVKMAYNFQ) the chain is on the cytoplasmic side. Residues 1175–1195 (IQLLATMVVDYAACWIIEELM) traverse the membrane as a helical segment. At 1196 to 1211 (KKYFRDNKPKEIVLRN) the chain is on the lumenal side.

This sequence belongs to the cation transport ATPase (P-type) (TC 3.A.3) family. Type V subfamily. Requires Mg(2+) as cofactor.

It localises to the endoplasmic reticulum membrane. The catalysed reaction is [protein]-with a C-terminal TM segment(out) + ATP + H2O = [protein]-with a C-terminal TM segment(in) + ADP + phosphate + H(+). Endoplasmic reticulum translocase required to remove mitochondrial transmembrane proteins mistargeted to the endoplasmic reticulum. Acts as a dislocase that mediates the ATP-dependent extraction of mislocalized mitochondrial transmembrane proteins from the endoplasmic reticulum membrane. Specifically binds mitochondrial tail-anchored transmembrane proteins: has an atypically large substrate-binding pocket that recognizes and binds moderately hydrophobic transmembranes with short hydrophilic lumenal domains. Involved in controlling nuclear calcium ion levels. Required for cytokinesis and stabilizing microtubules. Required for assembly of the forespore membrane. Involved in calcium transport to the endoplasmic reticulum. The protein is Endoplasmic reticulum transmembrane helix translocase of Schizosaccharomyces pombe (strain 972 / ATCC 24843) (Fission yeast).